We begin with the raw amino-acid sequence, 739 residues long: Xylosyl- and glucuronyltransferase LARGE2s (739 aa).

Residues Met1–Lys10 are Cytoplasmic-facing. Residues Leu11–Ser31 form a helical; Signal-anchor for type II membrane protein membrane-spanning segment. At Leu32–Leu739 the chain is on the lumenal side. The segment at Ala80 to Asn105 is disordered. N-linked (GlcNAc...) asparagine glycosylation is found at Asn105, Asn131, and Asn217. Positions Leu121–Arg396 are xylosyltransferase activity. Mn(2+)-binding residues include Asp225 and Asp227. Residue Asn255 is glycosylated (N-linked (GlcNAc...) asparagine). Residues Arg397 to Leu739 are glucuronyltransferase activity. Mn(2+) is bound by residues Asp546 and Asp548.

It in the C-terminal section; belongs to the glycosyltransferase 49 family. The protein in the N-terminal section; belongs to the glycosyltransferase 8 family. Mn(2+) is required as a cofactor.

The protein resides in the golgi apparatus membrane. It catalyses the reaction 3-O-[beta-D-GlcA-(1-&gt;3)-beta-D-Xyl-(1-&gt;4)-Rib-ol-P-Rib-ol-P-3-beta-D-GalNAc-(1-&gt;3)-beta-D-GlcNAc-(1-&gt;4)-(O-6-P-alpha-D-Man)]-Thr-[protein] + UDP-alpha-D-xylose = 3-O-[alpha-D-Xyl-(1-&gt;3)-beta-D-GlcA-(1-&gt;4)-beta-D-Xyl-(1-&gt;4)-Rib-ol-P-Rib-ol-P-3-beta-D-GalNAc-(1-&gt;3)-beta-D-GlcNAc-(1-&gt;4)-(O-6-P-alpha-D-Man)]-Thr-[protein] + UDP + H(+). The catalysed reaction is 3-O-{(1-&gt;[3)-alpha-D-Xyl-(1-&gt;3)-beta-D-GlcA-(1-&gt;](n)-4)-beta-D-Xyl-(1-&gt;4)-Rib-ol-P-Rib-ol-P-3-beta-D-GalNAc-(1-&gt;3)-beta-D-GlcNAc-(1-&gt;4)-O-6-P-alpha-D-Man}-L-Thr-[protein] + UDP-alpha-D-glucuronate = 3-O-{beta-D-GlcA-(1-&gt;[3)-alpha-D-Xyl-(1-&gt;3)-beta-D-GlcA-(1-&gt;](n)-4)-beta-D-Xyl-(1-&gt;4)-Rib-ol-P-Rib-ol-P-3-beta-D-GalNAc-(1-&gt;3)-beta-D-GlcNAc-(1-&gt;4)-O-6-P-alpha-D-Man}-L-Thr-[protein] + UDP + H(+). It carries out the reaction 3-O-{beta-D-GlcA-(1-&gt;[3)-alpha-D-Xyl-(1-&gt;3)-beta-D-GlcA-(1-&gt;](n)-4)-beta-D-Xyl-(1-&gt;4)-Rib-ol-P-Rib-ol-P-3-beta-D-GalNAc-(1-&gt;3)-beta-D-GlcNAc-(1-&gt;4)-O-6-P-alpha-D-Man}-L-Thr-[protein] + UDP-alpha-D-xylose = 3-O-{(1-&gt;[3)-alpha-D-Xyl-(1-&gt;3)-beta-D-GlcA-(1-&gt;](n+1)-4)-beta-D-Xyl-(1-&gt;4)-Rib-ol-P-Rib-ol-P-3-beta-D-GalNAc-(1-&gt;3)-beta-D-GlcNAc-(1-&gt;4)-O-6-P-alpha-D-Man}-L-Thr-[protein] + UDP + H(+). It functions in the pathway protein modification; protein glycosylation. Its function is as follows. Bifunctional glycosyltransferase with both alpha-1,3-xylosyltransferase and beta-1,3-glucuronyltransferase activities involved in the maturation of alpha-dystroglycan (DAG1) by glycosylation leading to DAG1 binding to laminin G-like domain-containing extracellular proteins with high affinity and in a phosphorylated-O-mannosyl trisaccharide dependent manner. Elongates the glucuronyl-beta-1,4-xylose-beta disaccharide primer structure by adding repeating units [-3-Xylose-alpha-1,3-GlcA-beta-1-] to produce a heteropolysaccharide. Supports the maturation of DAG1 more effectively than LARGE1. In addition, can modify both heparan sulfate (HS)- and chondroitin/dermatan sulfate (CS/DS)-proteoglycans (PGs), namely GPC4, with a glycosaminoglycan (GAG)-like polysaccharide composed of xylose and glucuronic acid to confer laminin binding. The protein is Xylosyl- and glucuronyltransferase LARGE2s of Gallus gallus (Chicken).